The chain runs to 186 residues: Small ribosomal subunit protein uS5 (186 aa).

The 64-residue stretch at 20–83 (FVDKLVHINR…EAAKRDMIFV (64 aa)) folds into the S5 DRBM domain.

The protein belongs to the universal ribosomal protein uS5 family. In terms of assembly, part of the 30S ribosomal subunit. Contacts proteins S4 and S8.

Functionally, with S4 and S12 plays an important role in translational accuracy. Its function is as follows. Located at the back of the 30S subunit body where it stabilizes the conformation of the head with respect to the body. The chain is Small ribosomal subunit protein uS5 from Brucella anthropi (strain ATCC 49188 / DSM 6882 / CCUG 24695 / JCM 21032 / LMG 3331 / NBRC 15819 / NCTC 12168 / Alc 37) (Ochrobactrum anthropi).